Reading from the N-terminus, the 206-residue chain is Small ribosomal subunit protein uS4 (206 aa).

Residues 18 to 46 (NIWGRPKSPVNRREYGPGQHGQRRKGKIS) form a disordered region. An S4 RNA-binding domain is found at 94 to 154 (RRLDAVVYRA…DRSKQMVALI (61 aa)).

It belongs to the universal ribosomal protein uS4 family. In terms of assembly, part of the 30S ribosomal subunit. Contacts protein S5. The interaction surface between S4 and S5 is involved in control of translational fidelity.

Its function is as follows. One of the primary rRNA binding proteins, it binds directly to 16S rRNA where it nucleates assembly of the body of the 30S subunit. In terms of biological role, with S5 and S12 plays an important role in translational accuracy. The sequence is that of Small ribosomal subunit protein uS4 from Roseobacter denitrificans (strain ATCC 33942 / OCh 114) (Erythrobacter sp. (strain OCh 114)).